The following is a 133-amino-acid chain: Hemoglobin subunit alpha-2 (133 aa).

The region spanning 1–133 is the Globin domain; that stretch reads NVKAVWEHVK…VKNVLTSRYR (133 aa). Residue H50 participates in O2 binding. Residue H79 coordinates heme b.

It belongs to the globin family. As to quaternary structure, minor hemoglobin is a heterotetramer of two alpha-2 chains and two beta-2 chains. Red blood cells.

Functionally, involved in oxygen transport from the lung to the various peripheral tissues. This Pleurodeles waltl (Iberian ribbed newt) protein is Hemoglobin subunit alpha-2.